Here is a 74-residue protein sequence, read N- to C-terminus: Translation initiation factor IF-1, chloroplastic (74 aa).

Positions 1–72 (MEKQNIIEME…TKGRITYRLR (72 aa)) constitute an S1-like domain.

This sequence belongs to the IF-1 family. As to quaternary structure, component of the 30S ribosomal translation pre-initiation complex which assembles on the 30S ribosome in the order IF-2 and IF-3, IF-1 and N-formylmethionyl-tRNA(fMet); mRNA recruitment can occur at any time during PIC assembly.

The protein resides in the plastid. The protein localises to the chloroplast. One of the essential components for the initiation of protein synthesis. Stabilizes the binding of IF-2 and IF-3 on the 30S subunit to which N-formylmethionyl-tRNA(fMet) subsequently binds. Helps modulate mRNA selection, yielding the 30S pre-initiation complex (PIC). Upon addition of the 50S ribosomal subunit IF-1, IF-2 and IF-3 are released leaving the mature 70S translation initiation complex. In Chlorokybus atmophyticus (Soil alga), this protein is Translation initiation factor IF-1, chloroplastic.